The primary structure comprises 73 residues: Conotoxin Gla(3)-TxVI (73 aa).

Positions 1 to 19 are cleaved as a signal peptide; sequence MQKLIILLLVAAVLMSAQA. The propeptide occupies 20–44; sequence VLQEKRPKEKIKFLSKRKTDAEKQQ. Disulfide bonds link C48–C62, C55–C66, and C61–C71. P49 bears the 4-hydroxyproline mark. Position 53 is a 4-carboxyglutamate; partial (E53). P54 carries the 4-hydroxyproline modification. The residue at position 60 (E60) is a 4-carboxyglutamate. W64 carries the 6'-bromotryptophan modification.

It belongs to the conotoxin O2 superfamily. As to expression, expressed by the venom duct.

Its subcellular location is the secreted. The polypeptide is Conotoxin Gla(3)-TxVI (Conus textile (Cloth-of-gold cone)).